The chain runs to 178 residues: RNA pyrophosphohydrolase (178 aa).

Positions 18–171 (PYRPCVGLMV…KRKVYEQVVA (154 aa)) constitute a Nudix hydrolase domain. A Nudix box motif is present at residues 59–80 (GGIDKGEDPAQAALRELYEETG).

It belongs to the Nudix hydrolase family. RppH subfamily. The cofactor is a divalent metal cation.

Functionally, accelerates the degradation of transcripts by removing pyrophosphate from the 5'-end of triphosphorylated RNA, leading to a more labile monophosphorylated state that can stimulate subsequent ribonuclease cleavage. This chain is RNA pyrophosphohydrolase, found in Brucella melitensis biotype 2 (strain ATCC 23457).